A 428-amino-acid polypeptide reads, in one-letter code: D-amino acid dehydrogenase (428 aa).

3–17 (VVILGSGVVGVASAY) provides a ligand contact to FAD.

It belongs to the DadA oxidoreductase family. It depends on FAD as a cofactor.

The catalysed reaction is a D-alpha-amino acid + A + H2O = a 2-oxocarboxylate + AH2 + NH4(+). The protein operates within amino-acid degradation; D-alanine degradation; NH(3) and pyruvate from D-alanine: step 1/1. In terms of biological role, oxidative deamination of D-amino acids. The sequence is that of D-amino acid dehydrogenase from Burkholderia cenocepacia (strain HI2424).